The primary structure comprises 1225 residues: RNA-directed RNA polymerase VP2 (1225 aa).

In terms of domain architecture, RdRp catalytic spans 497–727; the sequence is LFLSFMPYTI…NSIVLLQQLV (231 aa).

This sequence belongs to the reoviridae RNA-directed RNA polymerase family. In terms of assembly, interacts with VP6.

The catalysed reaction is RNA(n) + a ribonucleoside 5'-triphosphate = RNA(n+1) + diphosphate. Its function is as follows. RNA-directed RNA polymerase that is involved in transcription and genome replication. Following infection, it catalyzes the synthesis of fully conservative plus strands. After core assembly, which consists in recruitment of one capped plus-strand for each genomic segments and polymerase complexes, the polymerase switches mode and catalyzes the synthesis of complementary minus-strands. The sequence is that of RNA-directed RNA polymerase VP2 (S2) from Lymantria dispar (Gypsy moth).